The following is a 232-amino-acid chain: Large ribosomal subunit protein uL1 (232 aa).

It belongs to the universal ribosomal protein uL1 family. In terms of assembly, part of the 50S ribosomal subunit.

In terms of biological role, binds directly to 23S rRNA. The L1 stalk is quite mobile in the ribosome, and is involved in E site tRNA release. Functionally, protein L1 is also a translational repressor protein, it controls the translation of the L11 operon by binding to its mRNA. The sequence is that of Large ribosomal subunit protein uL1 from Bacillus pumilus (strain SAFR-032).